A 122-amino-acid chain; its full sequence is Large ribosomal subunit protein uL14 (122 aa).

This sequence belongs to the universal ribosomal protein uL14 family. Part of the 50S ribosomal subunit. Forms a cluster with proteins L3 and L19. In the 70S ribosome, L14 and L19 interact and together make contacts with the 16S rRNA in bridges B5 and B8.

Binds to 23S rRNA. Forms part of two intersubunit bridges in the 70S ribosome. The chain is Large ribosomal subunit protein uL14 from Rhodospirillum rubrum (strain ATCC 11170 / ATH 1.1.1 / DSM 467 / LMG 4362 / NCIMB 8255 / S1).